The primary structure comprises 655 residues: Spastin (655 aa).

The Cytoplasmic segment spans residues 1 to 58; the sequence is MLFDLINSFLKNGINNSNNNNNNNNNKNNFYNSLEDDDYLLNNQTTKVSLYLYFFIFA. Positions 59-79 form an intramembrane region, helical; that stretch reads FMFLVVDLIMLYYKHRENIES. Residues 80–655 lie on the Cytoplasmic side of the membrane; it reads RETDLSLKLN…EKWNQKFGTI (576 aa). Positions 102 to 140 are enriched in low complexity; the sequence is KSSPTTSTTTTTITPTTTSSSQLRQPSTPKTTTKTINSP. The interval 102–151 is disordered; that stretch reads KSSPTTSTTTTTITPTTTSSSQLRQPSTPKTTTKTINSPPSTPKSPPPLP. The segment covering 141-151 has biased composition (pro residues); sequence PSTPKSPPPLP. An MIT domain is found at 169 to 232; sequence LNEAKSQIDS…KRAEYLKNEL (64 aa). The tract at residues 261-325 is disordered; that stretch reads EQQQQQQQQS…TITSPGNKYG (65 aa). A compositionally biased stretch (low complexity) spans 262–320; the sequence is QQQQQQQQSSSTYRNSLNLSSSKSNSTINNRHSISSLSSLNSTTATTTTPSNTSTITSP. An ATP-binding site is contributed by 424–431; the sequence is GPPGNGKT.

It belongs to the AAA ATPase family. Spastin subfamily. In terms of assembly, homohexamer. The homohexamer is stabilized by ATP-binding. The homohexamer may adopt a ring conformation through which microtubules pass prior to being severed. Interacts with microtubules.

The protein localises to the membrane. It localises to the cytoplasm. The protein resides in the cytoskeleton. Its subcellular location is the microtubule organizing center. It is found in the centrosome. It catalyses the reaction n ATP + n H2O + a microtubule = n ADP + n phosphate + (n+1) alpha/beta tubulin heterodimers.. Functionally, ATP-dependent microtubule severing protein. Microtubule severing may promote reorganization of cellular microtubule arrays and the release of microtubules from the microtubule organizing center following nucleation. In Dictyostelium discoideum (Social amoeba), this protein is Spastin.